A 66-amino-acid chain; its full sequence is MIIPMRCFTCGRPLAQYWEEFRSRVEGGEDPRKVLDELGVKRYCCRKTLLAHVPAIYEVRKFKRVL.

The Zn(2+) site is built by cysteine 7, cysteine 10, cysteine 44, and cysteine 45.

This sequence belongs to the archaeal Rpo10/eukaryotic RPB10 RNA polymerase subunit family. Part of the RNA polymerase complex. It depends on Zn(2+) as a cofactor.

It localises to the cytoplasm. The catalysed reaction is RNA(n) + a ribonucleoside 5'-triphosphate = RNA(n+1) + diphosphate. Functionally, DNA-dependent RNA polymerase (RNAP) catalyzes the transcription of DNA into RNA using the four ribonucleoside triphosphates as substrates. This Hyperthermus butylicus (strain DSM 5456 / JCM 9403 / PLM1-5) protein is DNA-directed RNA polymerase subunit Rpo10.